Consider the following 470-residue polypeptide: 6-phospho-beta-galactosidase (470 aa).

Residues Q19, H116, N159, E160, and N297 each contribute to the D-galactose 6-phosphate site. Catalysis depends on E160, which acts as the Proton donor. E375 serves as the catalytic Nucleophile. D-galactose 6-phosphate-binding residues include S430, W431, K437, and Y439.

This sequence belongs to the glycosyl hydrolase 1 family.

It carries out the reaction a 6-phospho-beta-D-galactoside + H2O = D-galactose 6-phosphate + an alcohol. It participates in carbohydrate metabolism; lactose degradation; D-galactose 6-phosphate and beta-D-glucose from lactose 6-phosphate: step 1/1. This Staphylococcus aureus (strain COL) protein is 6-phospho-beta-galactosidase.